The following is a 418-amino-acid chain: Actin-related protein 3B (418 aa).

The protein belongs to the actin family. ARP3 subfamily. As to quaternary structure, interacts with the Arp2/3 complex composed of ARP2, ARP3, ARPC1B, ARPC1B/p41-ARC, ARPC2/p34-ARC, ARPC3/p21-ARC, ARPC4/p20-ARC and ARPC5/p16-ARC. In terms of tissue distribution, detected in fetal brain. Detected throughout the adult brain, in neurons from gray matter, but not in white matter. Detected in liver, skeletal muscle and pancreas. Detected in lung adenocarcinoma cells with low metastatic potential, but not in lung adenocarcinoma cells with high metastatic potential.

The protein resides in the cytoplasm. It localises to the cytoskeleton. It is found in the cell projection. Plays a role in the organization of the actin cytoskeleton. May function as ATP-binding component of the Arp2/3 complex which is involved in regulation of actin polymerization and together with an activating nucleation-promoting factor (NPF) mediates the formation of branched actin networks. May decrease the metastatic potential of tumors. In Homo sapiens (Human), this protein is Actin-related protein 3B (ACTR3B).